Consider the following 156-residue polypeptide: Small ribosomal subunit protein uS7 (156 aa).

It belongs to the universal ribosomal protein uS7 family. In terms of assembly, part of the 30S ribosomal subunit. Contacts proteins S9 and S11.

Functionally, one of the primary rRNA binding proteins, it binds directly to 16S rRNA where it nucleates assembly of the head domain of the 30S subunit. Is located at the subunit interface close to the decoding center, probably blocks exit of the E-site tRNA. In Bacillus cereus (strain B4264), this protein is Small ribosomal subunit protein uS7.